A 492-amino-acid chain; its full sequence is Protein nucleotidyltransferase YdiU (492 aa).

8 residues coordinate ATP: G88, G90, R91, K111, D123, G124, R174, and R181. The active-site Proton acceptor is the D250. N251 and D260 together coordinate Mg(2+). Residue D260 participates in ATP binding.

The protein belongs to the SELO family. It depends on Mg(2+) as a cofactor. Mn(2+) serves as cofactor.

It catalyses the reaction L-seryl-[protein] + ATP = 3-O-(5'-adenylyl)-L-seryl-[protein] + diphosphate. The catalysed reaction is L-threonyl-[protein] + ATP = 3-O-(5'-adenylyl)-L-threonyl-[protein] + diphosphate. The enzyme catalyses L-tyrosyl-[protein] + ATP = O-(5'-adenylyl)-L-tyrosyl-[protein] + diphosphate. It carries out the reaction L-histidyl-[protein] + UTP = N(tele)-(5'-uridylyl)-L-histidyl-[protein] + diphosphate. It catalyses the reaction L-seryl-[protein] + UTP = O-(5'-uridylyl)-L-seryl-[protein] + diphosphate. The catalysed reaction is L-tyrosyl-[protein] + UTP = O-(5'-uridylyl)-L-tyrosyl-[protein] + diphosphate. Nucleotidyltransferase involved in the post-translational modification of proteins. It can catalyze the addition of adenosine monophosphate (AMP) or uridine monophosphate (UMP) to a protein, resulting in modifications known as AMPylation and UMPylation. The protein is Protein nucleotidyltransferase YdiU of Rhodopseudomonas palustris (strain TIE-1).